The chain runs to 310 residues: Methionyl-tRNA formyltransferase (310 aa).

109 to 112 (SLLP) is a (6S)-5,6,7,8-tetrahydrofolate binding site.

Belongs to the Fmt family.

It carries out the reaction L-methionyl-tRNA(fMet) + (6R)-10-formyltetrahydrofolate = N-formyl-L-methionyl-tRNA(fMet) + (6S)-5,6,7,8-tetrahydrofolate + H(+). Attaches a formyl group to the free amino group of methionyl-tRNA(fMet). The formyl group appears to play a dual role in the initiator identity of N-formylmethionyl-tRNA by promoting its recognition by IF2 and preventing the misappropriation of this tRNA by the elongation apparatus. The protein is Methionyl-tRNA formyltransferase of Macrococcus caseolyticus (strain JCSC5402) (Macrococcoides caseolyticum).